A 186-amino-acid chain; its full sequence is UPF0200 protein PF1294 (186 aa).

An ATP-binding site is contributed by 7 to 14 (GMPGSGKG).

This sequence belongs to the UPF0200 family.

The sequence is that of UPF0200 protein PF1294 from Pyrococcus furiosus (strain ATCC 43587 / DSM 3638 / JCM 8422 / Vc1).